The chain runs to 796 residues: Potassium transporter 10 (796 aa).

The segment at 1 to 30 (MAGRVESSIGGGEIDEEGDERGSMWDLDQS) is disordered. The Cytoplasmic segment spans residues 1–58 (MAGRVESSIGGGEIDEEGDERGSMWDLDQSLDQPMDEEAGRLRNMYREKKFSAFLLLQ). A helical membrane pass occupies residues 59-79 (LSFQSLGVVYGDLGTSPLYVF). The Extracellular segment spans residues 80-95 (YNTFPRGIKDPEDIIG). A helical transmembrane segment spans residues 96–116 (ALSLIIYSLTLIPLLKYVFVV). At 117–184 (CKANDNGQGG…ENGTSRKNAL (68 aa)) the chain is on the cytoplasmic side. A helical membrane pass occupies residues 185–205 (LILVLVGTCMVIGDGILTPAI). Topologically, residues 206–217 (SVLSAAGGLRVN) are extracellular. A helical transmembrane segment spans residues 218 to 238 (LPHINNGIVVVVAVVILVSLF). At 239-248 (SVQHYGTDRV) the chain is on the cytoplasmic side. A helical membrane pass occupies residues 249–269 (GWLFAPIVFLWFLFIASIGMF). Topologically, residues 270–298 (NIWKHDPSVLKAFSPVYIFRYFKRGGQDR) are extracellular. Residues 299 to 319 (WTSLGGIMLSITGIEALFADL) traverse the membrane as a helical segment. Residues 320 to 321 (SH) are Cytoplasmic-facing. The chain crosses the membrane as a helical span at residues 322-342 (FPVSAVQFAFTVIVFPCLLLA). The Extracellular segment spans residues 343 to 368 (YSGQAAYLRKYPHHVEDAFYQSIPKR). The helical transmembrane segment at 369-389 (VYWPMFIIATAAAIVASQATI) threads the bilayer. Residues 390 to 420 (SATFSLIKQALAHGCFPRVKVVHTSRKFLGQ) are Cytoplasmic-facing. The chain crosses the membrane as a helical span at residues 421 to 441 (IYVPDINWILMILCIAVTAGF). The Extracellular segment spans residues 442 to 453 (KNQNQIGNAYGT). Residues 454–474 (AVVIVMLVTTLLMMLIMILVW) form a helical membrane-spanning segment. The Cytoplasmic portion of the chain corresponds to 475 to 480 (RCHWVL). Residues 481–501 (VLLFTLLSLVVECTYFSAVLF) form a helical membrane-spanning segment. At 502-505 (KVNQ) the chain is on the extracellular side. A helical transmembrane segment spans residues 506–526 (GGWVPLVIAAAFLVIMYVWHY). At 527 to 796 (GTLKRYEFEM…LLNVGQIFYV (270 aa)) the chain is on the cytoplasmic side.

Belongs to the HAK/KUP transporter (TC 2.A.72.3) family.

It localises to the cell membrane. Functionally, putative potassium transporter. This is Potassium transporter 10 (POT10) from Arabidopsis thaliana (Mouse-ear cress).